The following is a 441-amino-acid chain: MKERSTELVQGFRHSVPYINAHRGKTFVIMLGGEAIEHANFSSIVNDIGLLHSLGIKLVVVYGARPQIDANLTTHHYEPHYHKNTRITDSTTLELVKQAAGMLQLDITARLSMSLNNTPLQGAHINVVSGNFIIAQPLGVDDGVDYCHSGRIRRIDEEAVHRQLNSGAIVLLGPVAVSVTGESFNLTSEEVATQLAIKLKAEKMIGFCSSQGVTNEEGSIISELFPDDAQRRIDTLEQAGDYHSGTVRFLRGAVKACRSGVRRSHLISYQDDGALLQELFSRDGIGTQIVMESAEQVRRATINDIGGILELIRPLEEQGILVRRSREQLEMEIDKFTVVVRDNLTIACAALYPFPEESIGEMACVAVHPDYRSSSRGDMLLMRIAAQARQQGLQKLFVLTTHSIHWFQERGFLPAEVEMLPKKKQALYNYQRRSKILVLDL.

Residues 295–434 form the N-acetyltransferase domain; that stretch reads EQVRRATIND…QALYNYQRRS (140 aa).

This sequence belongs to the acetyltransferase family. ArgA subfamily. As to quaternary structure, homohexamer.

The protein resides in the cytoplasm. The enzyme catalyses L-glutamate + acetyl-CoA = N-acetyl-L-glutamate + CoA + H(+). It functions in the pathway amino-acid biosynthesis; L-arginine biosynthesis; N(2)-acetyl-L-ornithine from L-glutamate: step 1/4. This is Amino-acid acetyltransferase from Pectobacterium carotovorum subsp. carotovorum (strain PC1).